Here is a 108-residue protein sequence, read N- to C-terminus: Nucleoid-associated protein mma_2329 (108 aa).

Belongs to the YbaB/EbfC family. In terms of assembly, homodimer.

It localises to the cytoplasm. The protein localises to the nucleoid. In terms of biological role, binds to DNA and alters its conformation. May be involved in regulation of gene expression, nucleoid organization and DNA protection. The protein is Nucleoid-associated protein mma_2329 of Janthinobacterium sp. (strain Marseille) (Minibacterium massiliensis).